The primary structure comprises 378 residues: Putative protein YbfL (378 aa).

This sequence belongs to the transposase 11 family.

This is Putative protein YbfL (ybfL) from Escherichia coli (strain K12).